Reading from the N-terminus, the 376-residue chain is DNA replication and repair protein RecF (376 aa).

An ATP-binding site is contributed by 30–37 (GNNAQGKS).

It belongs to the RecF family.

It localises to the cytoplasm. In terms of biological role, the RecF protein is involved in DNA metabolism; it is required for DNA replication and normal SOS inducibility. RecF binds preferentially to single-stranded, linear DNA. It also seems to bind ATP. The polypeptide is DNA replication and repair protein RecF (Nostoc sp. (strain PCC 7120 / SAG 25.82 / UTEX 2576)).